Reading from the N-terminus, the 1687-residue chain is Muscle calcium channel subunit alpha-1 (1687 aa).

Residues M1–Q33 form a disordered region. Topologically, residues M1–K61 are cytoplasmic. Positions E9–K23 are enriched in polar residues. The stretch at N48 to F330 is one I repeat. Residues L62 to V80 traverse the membrane as a helical segment. Residues Y81–I99 are Extracellular-facing. An N-linked (GlcNAc...) asparagine glycan is attached at N90. The chain crosses the membrane as a helical span at residues E100–A117. Residues Y118–N130 lie on the Cytoplasmic side of the membrane. A helical transmembrane segment spans residues G131–I145. Over S146–F157 the chain is Extracellular. Residues D158 to G176 form a helical membrane-spanning segment. Residues V177–H196 are Cytoplasmic-facing. A helical transmembrane segment spans residues I197–F216. Residues S217–W302 are Extracellular-facing. E285 contacts Ca(2+). A helical membrane pass occupies residues E303–S327. The Cytoplasmic portion of the chain corresponds to G328 to Q434. One copy of the II repeat lies at N420–L667. The chain crosses the membrane as a helical span at residues A435–E454. Residues H455–E467 lie on the Extracellular side of the membrane. A helical membrane pass occupies residues Y468 to S487. Residues L488–S496 are Cytoplasmic-facing. The chain crosses the membrane as a helical span at residues L497–L515. Topologically, residues T516–G525 are extracellular. The helical transmembrane segment at V526–W544 threads the bilayer. Residues H545 to S563 are Cytoplasmic-facing. The chain crosses the membrane as a helical span at residues L564–F583. The Extracellular portion of the chain corresponds to G584–V639. Ca(2+) is bound at residue E617. A helical membrane pass occupies residues A640–V664. Residues D665–R785 are Cytoplasmic-facing. The stretch at N777–F1059 is one III repeat. The helical transmembrane segment at L786–A809 threads the bilayer. The Extracellular segment spans residues E810 to F826. A helical transmembrane segment spans residues D827–G846. Residues F847–F854 lie on the Cytoplasmic side of the membrane. A helical membrane pass occupies residues C855–N877. Topologically, residues S878 to K885 are extracellular. A helical membrane pass occupies residues I886–N900. The Cytoplasmic segment spans residues R901–N921. Residues I922–F941 form a helical membrane-spanning segment. The Extracellular portion of the chain corresponds to K942–P1030. The dihydropyridine binding stretch occupies residues R979–K1068. E1005 is a binding site for Ca(2+). Residues I1031–V1055 traverse the membrane as a helical segment. The Cytoplasmic portion of the chain corresponds to I1056–S1110. Residues H1096–F1370 form an IV repeat. The chain crosses the membrane as a helical span at residues F1111–K1129. Residues F1130–A1143 lie on the Extracellular side of the membrane. Residues L1144–F1163 form a helical membrane-spanning segment. Residues R1164 to A1172 are Cytoplasmic-facing. A helical membrane pass occupies residues W1173–S1191. At E1192–S1219 the chain is on the extracellular side. A helical membrane pass occupies residues I1220–G1238. Over E1239–Y1257 the chain is Cytoplasmic. A helical transmembrane segment spans residues V1258–F1277. Residues G1278–A1343 lie on the Extracellular side of the membrane. Positions K1327–I1389 are dihydropyridine binding. The interval N1337–S1378 is phenylalkylamine binding. Residues F1344 to F1362 traverse the membrane as a helical segment. Residues V1363–F1687 lie on the Cytoplasmic side of the membrane.

The protein belongs to the calcium channel alpha-1 subunit (TC 1.A.1.11) family. As to expression, predominantly expressed in the larval body wall musculature. In adults, highest expression in thorax followed by head and at a lower extent by abdomen.

Its subcellular location is the membrane. Functionally, voltage-sensitive calcium channels (VSCC) mediate the entry of calcium ions into excitable cells and are also involved in a variety of calcium-dependent processes, including muscle contraction, hormone or neurotransmitter release, gene expression, cell motility, cell division and cell death. MDL-alpha1 encodes a dihydropyridine- and diltiazem-sensitive current in larval body wall muscle. In Musca domestica (House fly), this protein is Muscle calcium channel subunit alpha-1.